We begin with the raw amino-acid sequence, 135 residues long: Evasin P1134 (135 aa).

Positions Met1 to Ala31 are cleaved as a signal peptide. 3 disulfide bridges follow: Cys41–Cys63, Cys45–Cys65, and Cys56–Cys76. A glycan (N-linked (GlcNAc...) asparagine) is linked at Asn44. The disordered stretch occupies residues Glu88–Pro112.

The protein localises to the secreted. Its function is as follows. Salivary chemokine-binding protein which binds to host chemokine CXCL1. The polypeptide is Evasin P1134 (Ixodes ricinus (Common tick)).